Consider the following 104-residue polypeptide: Cell division protein FtsL (104 aa).

Over 1 to 20 (MSKPSLTLPRIVLHDLWQHK) the chain is Cytoplasmic. A helical membrane pass occupies residues 21-43 (WILLLALLVLSNAVAVVYTSHVS). Topologically, residues 44-104 (RKLTTEWDQL…PSEEIVVKVP (61 aa)) are periplasmic.

The protein belongs to the FtsL family. In terms of assembly, part of a complex composed of FtsB, FtsL and FtsQ.

The protein localises to the cell inner membrane. Essential cell division protein. May link together the upstream cell division proteins, which are predominantly cytoplasmic, with the downstream cell division proteins, which are predominantly periplasmic. This chain is Cell division protein FtsL, found in Shewanella oneidensis (strain ATCC 700550 / JCM 31522 / CIP 106686 / LMG 19005 / NCIMB 14063 / MR-1).